Consider the following 400-residue polypeptide: D(3) dopamine receptor (400 aa).

The Extracellular segment spans residues 1 to 32 (MAPLSQLSGHLNYTCGVENSTGASQARPHAYY). N-linked (GlcNAc...) asparagine glycans are attached at residues Asn12 and Asn19. The helical transmembrane segment at 33–55 (ALSYCALILAIVFGNGLVCMAVL) threads the bilayer. Over 56 to 65 (KERALQTTTN) the chain is Cytoplasmic. A helical transmembrane segment spans residues 66 to 88 (YLVVSLAVADLLVATLVMPWVVY). Residues 89 to 104 (LEVTGGVWNFSRVCCD) lie on the Extracellular side of the membrane. The N-linked (GlcNAc...) asparagine glycan is linked to Asn97. An intrachain disulfide couples Cys103 to Cys181. The chain crosses the membrane as a helical span at residues 105-126 (VFVTLDVMMCTASILNLCAISI). Residues 127 to 149 (DRYTAVVMPVHYQHGTGQSSCRR) are Cytoplasmic-facing. A helical transmembrane segment spans residues 150 to 170 (VTLMITAVWVLAFAVSCPLLF). The Extracellular portion of the chain corresponds to 171 to 187 (GFNTTGDPTVCSISNPD). N-linked (GlcNAc...) asparagine glycosylation occurs at Asn173. A helical membrane pass occupies residues 188-209 (FVIYSSVVSFYLPFGVTVLVYA). Topologically, residues 210–329 (RIYVVLKQRR…VPLREKKATQ (120 aa)) are cytoplasmic. The helical transmembrane segment at 330–351 (MVAIVLGAFIVCWLPFFLTHVL) threads the bilayer. At 352-366 (NTHCQTCHVSPELYS) the chain is on the extracellular side. A disulfide bond links Cys355 and Cys358. A helical transmembrane segment spans residues 367–386 (ATTWLGYVNSALNPVIYTTF). Topologically, residues 387-400 (NIEFRKAFLKILSC) are cytoplasmic.

The protein belongs to the G-protein coupled receptor 1 family. In terms of assembly, interacts with CLIC6. Interacts with GRK4. Interacts with PALM. Interacts with FLNA (via filamin repeat 21); increases PKA-mediated phosphorylation of FLNA. Phosphorylated by GRK4. Post-translationally, palmitoylated.

Its subcellular location is the cell membrane. Dopamine receptor whose activity is mediated by G proteins which inhibit adenylyl cyclase. Promotes cell proliferation. The sequence is that of D(3) dopamine receptor (DRD3) from Chlorocebus aethiops (Green monkey).